A 238-amino-acid polypeptide reads, in one-letter code: Ribitol-5-phosphate cytidylyltransferase 2 (238 aa).

CTP contacts are provided by residues 7–10 (LAGG) and 81–87 (GTDRNET).

This sequence belongs to the IspD/TarI cytidylyltransferase family. TarI subfamily.

It carries out the reaction D-ribitol 5-phosphate + CTP + H(+) = CDP-L-ribitol + diphosphate. It functions in the pathway cell wall biogenesis; poly(ribitol phosphate) teichoic acid biosynthesis. Catalyzes the transfer of the cytidylyl group of CTP to D-ribitol 5-phosphate. The protein is Ribitol-5-phosphate cytidylyltransferase 2 of Staphylococcus aureus (strain bovine RF122 / ET3-1).